The sequence spans 226 residues: Fibronectin type III domain-containing protein 9 (226 aa).

Residues 1-101 (MNIEVGNVSH…FHTLDKSPLA (101 aa)) form the Fibronectin type-III domain. Residues 113-133 (LWVLMAILLACFTAVLAFICL) traverse the membrane as a helical segment.

It is found in the membrane. The chain is Fibronectin type III domain-containing protein 9 (Fndc9) from Mus musculus (Mouse).